Reading from the N-terminus, the 261-residue chain is Type III pantothenate kinase (261 aa).

6-13 (DVGNTNTV) is a binding site for ATP. 107–110 (GADR) contributes to the substrate binding site. The Proton acceptor role is filled by Asp109. Asp129 provides a ligand contact to K(+). ATP is bound at residue Thr132. Thr183 serves as a coordination point for substrate.

This sequence belongs to the type III pantothenate kinase family. In terms of assembly, homodimer. The cofactor is NH4(+). K(+) is required as a cofactor.

Its subcellular location is the cytoplasm. The enzyme catalyses (R)-pantothenate + ATP = (R)-4'-phosphopantothenate + ADP + H(+). Its pathway is cofactor biosynthesis; coenzyme A biosynthesis; CoA from (R)-pantothenate: step 1/5. Functionally, catalyzes the phosphorylation of pantothenate (Pan), the first step in CoA biosynthesis. This Kosmotoga olearia (strain ATCC BAA-1733 / DSM 21960 / TBF 19.5.1) protein is Type III pantothenate kinase.